Reading from the N-terminus, the 122-residue chain is Large ribosomal subunit protein uL14c (122 aa).

This sequence belongs to the universal ribosomal protein uL14 family. In terms of assembly, part of the 50S ribosomal subunit.

Its subcellular location is the plastid. It is found in the chloroplast. Its function is as follows. Binds to 23S rRNA. This Chara vulgaris (Common stonewort) protein is Large ribosomal subunit protein uL14c.